Here is a 222-residue protein sequence, read N- to C-terminus: MSFTRRKFVLGMGTVIFFTGSASSLLANTRQEKEVRYAMIHDESRCNGCNICARACRKTNHVPAQGSRLSIAHIPVTDNDNETQYHFFRQSCQHCEDAPCIDVCPTGASWRDEQGIVRVEKSQCIGCSYCIGACPYQVRYLNPVTKVADKCDFCAESRLAKGFPPICVSACPEHALIFGREDSPEIQAWLQQNKYYQYQLPGAGKPHLYRRFGQHLIKKENV.

A signal peptide (tat-type signal) is located at residues 1 to 27 (MSFTRRKFVLGMGTVIFFTGSASSLLA). 3 4Fe-4S ferredoxin-type domains span residues 37–67 (YAMI…AQGS), 83–114 (TQYH…RDEQ), and 115–144 (GIVR…LNPV). 16 residues coordinate [4Fe-4S] cluster: cysteine 46, cysteine 49, cysteine 52, cysteine 56, cysteine 92, cysteine 95, cysteine 100, cysteine 104, cysteine 124, cysteine 127, cysteine 130, cysteine 134, cysteine 151, cysteine 154, cysteine 167, and cysteine 171.

In terms of processing, exported by the Tat system. The position of the signal peptide cleavage has not been experimentally proven. Can also be exported by the Sec system.

This is an uncharacterized protein from Escherichia coli (strain K12).